Here is a 437-residue protein sequence, read N- to C-terminus: Cytochrome b (437 aa).

A helical membrane pass occupies residues 45-65 (WIWGIVLAFTLVLQIVTGIVL). The heme b site is built by His-97 and His-111. 9 consecutive transmembrane segments (helical) span residues 100-120 (GASLFFLAVYIHIFRGLYYGS), 129-149 (WIVGMVIYLLMMGTAFMGYVL), 156-176 (FWGATVITGLFGAIPGIGPSI), 194-214 (FFSLHYLLPFVIAALVAIHIW), 248-268 (FVIKDLFALALVLLGFFAVVA), 298-318 (FLPFYAILRAFAADVWVVILV), 330-350 (FFGVIAMFGAIAVMALAPWLD), 365-385 (MWFWFLVLDFVVLTWVGAMPT), and 391-411 (WISLIASTYWFAYFLVILPLL). Positions 198 and 212 each coordinate heme b.

It belongs to the cytochrome b family. In terms of assembly, the main subunits of complex b-c1 are: cytochrome b, cytochrome c1 and the Rieske protein. Requires heme b as cofactor.

The protein localises to the cell membrane. Its function is as follows. Component of the ubiquinol-cytochrome c reductase complex (complex III or cytochrome b-c1 complex), which is a respiratory chain that generates an electrochemical potential coupled to ATP synthesis. This Rhodobacter capsulatus (Rhodopseudomonas capsulata) protein is Cytochrome b (petB).